We begin with the raw amino-acid sequence, 118 residues long: Holo-[acyl-carrier-protein] synthase (118 aa).

Residues aspartate 8 and glutamate 57 each contribute to the Mg(2+) site.

The protein belongs to the P-Pant transferase superfamily. AcpS family. Requires Mg(2+) as cofactor.

Its subcellular location is the cytoplasm. The enzyme catalyses apo-[ACP] + CoA = holo-[ACP] + adenosine 3',5'-bisphosphate + H(+). In terms of biological role, transfers the 4'-phosphopantetheine moiety from coenzyme A to a Ser of acyl-carrier-protein. In Pediococcus pentosaceus (strain ATCC 25745 / CCUG 21536 / LMG 10740 / 183-1w), this protein is Holo-[acyl-carrier-protein] synthase.